The primary structure comprises 429 residues: Putative chloride channel protein ClcB-like (429 aa).

The next 11 membrane-spanning stretches (helical) occupy residues Met1 to Glu21, Leu44 to Leu64, Leu146 to Gly166, Val168 to Val188, Phe200 to Val220, Leu221 to Ile241, Leu259 to Asn279, Val283 to Cys303, Gly315 to Tyr335, Ala354 to Ile376, and Tyr383 to Ala405.

The protein belongs to the chloride channel (TC 2.A.49) family. ClcB subfamily.

It is found in the cell inner membrane. The chain is Putative chloride channel protein ClcB-like from Ralstonia nicotianae (strain ATCC BAA-1114 / GMI1000) (Ralstonia solanacearum).